We begin with the raw amino-acid sequence, 379 residues long: 1-deoxy-D-xylulose 5-phosphate reductoisomerase (379 aa).

Residues threonine 10, glycine 11, serine 12, isoleucine 13, asparagine 39, and asparagine 121 each coordinate NADPH. A 1-deoxy-D-xylulose 5-phosphate-binding site is contributed by lysine 122. Glutamate 123 contributes to the NADPH binding site. Mn(2+) is bound at residue aspartate 147. Residues serine 148, glutamate 149, serine 173, and histidine 196 each contribute to the 1-deoxy-D-xylulose 5-phosphate site. Glutamate 149 lines the Mn(2+) pocket. Glycine 202 contributes to the NADPH binding site. 1-deoxy-D-xylulose 5-phosphate-binding residues include serine 209, asparagine 214, lysine 215, and glutamate 218. Glutamate 218 is a binding site for Mn(2+).

Belongs to the DXR family. Requires Mg(2+) as cofactor. Mn(2+) is required as a cofactor.

It catalyses the reaction 2-C-methyl-D-erythritol 4-phosphate + NADP(+) = 1-deoxy-D-xylulose 5-phosphate + NADPH + H(+). It functions in the pathway isoprenoid biosynthesis; isopentenyl diphosphate biosynthesis via DXP pathway; isopentenyl diphosphate from 1-deoxy-D-xylulose 5-phosphate: step 1/6. Its function is as follows. Catalyzes the NADPH-dependent rearrangement and reduction of 1-deoxy-D-xylulose-5-phosphate (DXP) to 2-C-methyl-D-erythritol 4-phosphate (MEP). The protein is 1-deoxy-D-xylulose 5-phosphate reductoisomerase of Chlamydia pneumoniae (Chlamydophila pneumoniae).